Reading from the N-terminus, the 118-residue chain is Small ribosomal subunit protein uS13 (118 aa).

The tract at residues 94-118 (GLPVRGQRTKTNARTRKGPCKPIKK) is disordered.

It belongs to the universal ribosomal protein uS13 family. As to quaternary structure, part of the 30S ribosomal subunit. Forms a loose heterodimer with protein S19. Forms two bridges to the 50S subunit in the 70S ribosome.

Its function is as follows. Located at the top of the head of the 30S subunit, it contacts several helices of the 16S rRNA. In the 70S ribosome it contacts the 23S rRNA (bridge B1a) and protein L5 of the 50S subunit (bridge B1b), connecting the 2 subunits; these bridges are implicated in subunit movement. Contacts the tRNAs in the A and P-sites. The polypeptide is Small ribosomal subunit protein uS13 (Salmonella typhi).